The following is a 735-amino-acid chain: FHF complex subunit HOOK-interacting protein 2B (735 aa).

The interval 183–229 (SSSTSDEAAEKDCSGSSSPERASSPSSSSSACSLLSRSGAHPVSSPQ) is disordered. A compositionally biased stretch (low complexity) spans 196–221 (SGSSSPERASSPSSSSSACSLLSRSG).

It belongs to the FHIP family.

This Danio rerio (Zebrafish) protein is FHF complex subunit HOOK-interacting protein 2B (fhip2b).